Reading from the N-terminus, the 458-residue chain is Glutamyl-tRNA reductase (458 aa).

Residues 49–52 (TCNR), S109, 114–116 (EQQ), and Q120 contribute to the substrate site. Catalysis depends on C50, which acts as the Nucleophile. 191 to 196 (GAGAMA) is a binding site for NADP(+).

Belongs to the glutamyl-tRNA reductase family. In terms of assembly, homodimer.

It carries out the reaction (S)-4-amino-5-oxopentanoate + tRNA(Glu) + NADP(+) = L-glutamyl-tRNA(Glu) + NADPH + H(+). Its pathway is porphyrin-containing compound metabolism; protoporphyrin-IX biosynthesis; 5-aminolevulinate from L-glutamyl-tRNA(Glu): step 1/2. Functionally, catalyzes the NADPH-dependent reduction of glutamyl-tRNA(Glu) to glutamate 1-semialdehyde (GSA). This Corynebacterium aurimucosum (strain ATCC 700975 / DSM 44827 / CIP 107346 / CN-1) (Corynebacterium nigricans) protein is Glutamyl-tRNA reductase.